A 474-amino-acid chain; its full sequence is Peroxisome proliferator-activated receptor alpha (474 aa).

The segment at residues 106 to 180 is a DNA-binding region (nuclear receptor); the sequence is NLECRVCSDK…VGMSHNAIRF (75 aa). 2 NR C4-type zinc fingers span residues 109 to 129 and 146 to 168; these read CRVCSDKASGFHYGVHACEGC and CERMCKIQKKNRNKCQYCRFEKC. An NR LBD domain is found at 245-472; it reads FVIHDMETLC…HPLLQEIYRD (228 aa).

The protein belongs to the nuclear hormone receptor family. NR1 subfamily. Heterodimer with the retinoid X receptor. Ubiquitous.

It localises to the nucleus. Its function is as follows. Ligand-activated transcription factor. Key regulator of lipid metabolism. Activated by lipids. Receptor for peroxisome proliferators such as hypolipidemic drugs and fatty acids. Once activated by a ligand, the receptor binds to promoter elements of target genes. Regulates the peroxisomal beta-oxidation pathway of fatty acids. This Xenopus laevis (African clawed frog) protein is Peroxisome proliferator-activated receptor alpha (ppara).